Consider the following 875-residue polypeptide: Probable inorganic carbon transporter subunit DabA (875 aa).

Zn(2+)-binding residues include Cys-399, Asp-401, His-581, and Cys-596.

The protein belongs to the inorganic carbon transporter (TC 9.A.2) DabA family. Forms a complex with DabB. Zn(2+) is required as a cofactor.

It is found in the cell membrane. In terms of biological role, part of an energy-coupled inorganic carbon pump. The polypeptide is Probable inorganic carbon transporter subunit DabA (Bacillus thuringiensis (strain Al Hakam)).